A 319-amino-acid polypeptide reads, in one-letter code: DNA-directed RNA polymerase subunit alpha (319 aa).

The alpha N-terminal domain (alpha-NTD) stretch occupies residues 1 to 227 (MKEFIFPMKI…KHMNMLTNIS (227 aa)). An alpha C-terminal domain (alpha-CTD) region spans residues 242–319 (LMEKLTFSIE…NIGEQRSSEV (78 aa)).

The protein belongs to the RNA polymerase alpha chain family. In terms of assembly, homodimer. The RNAP catalytic core consists of 2 alpha, 1 beta, 1 beta' and 1 omega subunit. When a sigma factor is associated with the core the holoenzyme is formed, which can initiate transcription.

It carries out the reaction RNA(n) + a ribonucleoside 5'-triphosphate = RNA(n+1) + diphosphate. In terms of biological role, DNA-dependent RNA polymerase catalyzes the transcription of DNA into RNA using the four ribonucleoside triphosphates as substrates. The chain is DNA-directed RNA polymerase subunit alpha from Hydrogenobaculum sp. (strain Y04AAS1).